Here is a 348-residue protein sequence, read N- to C-terminus: Olfactory receptor 2T4 (348 aa).

Residues 1-57 (MDNITWMASHTGWSDFILMGLFRQSKHPMANITWMANHTGWSDFILLGLFRQSKHPA) are Extracellular-facing. 2 N-linked (GlcNAc...) asparagine glycosylation sites follow: Asn31 and Asn37. A helical transmembrane segment spans residues 58–81 (LLCVVIFVVFLMALSGNAVLILLI). The Cytoplasmic segment spans residues 82–89 (HCDAHLHT). The chain crosses the membrane as a helical span at residues 90–111 (PMYFFISQLSLMDMAYISVTVP). Residues 112 to 132 (KMLLDQVMGVNKISAPECGMQ) are Extracellular-facing. A disulfide bridge connects residues Cys129 and Cys221. Residues 133–152 (MFFYVTLAGSEFFLLATMAY) form a helical membrane-spanning segment. At 153-171 (DRYVAICHPLRYPVLMNHR) the chain is on the cytoplasmic side. Residues 172–190 (VCLFLSSGCWFLGSVDGFT) form a helical membrane-spanning segment. At 191 to 227 (FTPITMTFPFRGSREIHHFFCEVPAVLNLSCSDTSLY) the chain is on the extracellular side. Asn218 carries an N-linked (GlcNAc...) asparagine glycan. A helical membrane pass occupies residues 228-251 (EIFMYLCCVLMLLIPVVIISSSYL). Topologically, residues 252-268 (LILLTIHGMNSAEGRKK) are cytoplasmic. Residues 269–291 (AFATCSSHLTVVILFYGAAIYTY) form a helical membrane-spanning segment. At 292–304 (MLPSSYHTPEKDM) the chain is on the extracellular side. Residues 305-324 (MVSVFYTILTPVVNPLIYSL) traverse the membrane as a helical segment. At 325–348 (RNKDVMGALKKMLTVEPAFQKAME) the chain is on the cytoplasmic side.

The protein belongs to the G-protein coupled receptor 1 family.

Its subcellular location is the cell membrane. In terms of biological role, odorant receptor. The sequence is that of Olfactory receptor 2T4 (OR2T4) from Homo sapiens (Human).